We begin with the raw amino-acid sequence, 249 residues long: NH(3)-dependent NAD(+) synthetase (249 aa).

29 to 36 (GVSGGVDS) contacts ATP. A Mg(2+)-binding site is contributed by Asp-35. Arg-116 lines the deamido-NAD(+) pocket. Thr-136 is an ATP binding site. Position 141 (Glu-141) interacts with Mg(2+). 2 residues coordinate deamido-NAD(+): Lys-149 and Asp-156. ATP is bound by residues Lys-165 and Ser-187. 233–234 (HK) lines the deamido-NAD(+) pocket.

This sequence belongs to the NAD synthetase family. As to quaternary structure, homodimer.

It catalyses the reaction deamido-NAD(+) + NH4(+) + ATP = AMP + diphosphate + NAD(+) + H(+). It participates in cofactor biosynthesis; NAD(+) biosynthesis; NAD(+) from deamido-NAD(+) (ammonia route): step 1/1. In terms of biological role, catalyzes the ATP-dependent amidation of deamido-NAD to form NAD. Uses ammonia as a nitrogen source. In Syntrophomonas wolfei subsp. wolfei (strain DSM 2245B / Goettingen), this protein is NH(3)-dependent NAD(+) synthetase.